The primary structure comprises 542 residues: Chaperonin GroEL (542 aa).

ATP is bound by residues 29–32 (TLGP), K50, 86–90 (DGTTT), G415, and D495.

Belongs to the chaperonin (HSP60) family. Forms a cylinder of 14 subunits composed of two heptameric rings stacked back-to-back. Interacts with the co-chaperonin GroES.

It is found in the cytoplasm. It catalyses the reaction ATP + H2O + a folded polypeptide = ADP + phosphate + an unfolded polypeptide.. Functionally, together with its co-chaperonin GroES, plays an essential role in assisting protein folding. The GroEL-GroES system forms a nano-cage that allows encapsulation of the non-native substrate proteins and provides a physical environment optimized to promote and accelerate protein folding. The polypeptide is Chaperonin GroEL (Azobacteroides pseudotrichonymphae genomovar. CFP2).